The sequence spans 603 residues: Keratin, type II cuticular Hb4 (603 aa).

Residues 1-173 (MSCRSYRVSS…PNAQRVKRDE (173 aa)) form a head region. Residues 173–484 (EKEQIKTLNN…RLLEGEEIRI (312 aa)) enclose the IF rod domain. Residues 174–208 (KEQIKTLNNKFASFIDKVRFLEQQNKLLETKWSFL) are coil 1A. Residues 209–218 (QEQKCARSNL) form a linker 1 region. The interval 219-319 (EPLFDNYITN…YHEEIEMLQS (101 aa)) is coil 1B. Residues 320-336 (HISETSVIVKMDNSRDL) are linker 12. A coil 2 region spans residues 337 to 480 (NLDGIIAEVK…VTYRRLLEGE (144 aa)). The tract at residues 481–603 (EIRICEGVGP…STTTSRRTRY (123 aa)) is tail. Residues 579-603 (CSGGRGNRSSSVRFSSTTTSRRTRY) are disordered.

Belongs to the intermediate filament family. Heterotetramer of two type I and two type II keratins. In skin, only expressed in the suprabasal cells of tail scale epidermis. Suprabasally expressed in stratified squamous epithelia and also in the posterior unit of the complex filiform papillae of tongue. Expressed in rare anatomical sites in which an orthokeratinized stratum corneum would be too soft and a hard keratinized structure would be too rigid to meet the functional requirement of the respective epithelia.

This chain is Keratin, type II cuticular Hb4 (Krt84), found in Mus musculus (Mouse).